We begin with the raw amino-acid sequence, 346 residues long: N(4)-(beta-N-acetylglucosaminyl)-L-asparaginase (346 aa).

The first 23 residues, 1 to 23, serve as a signal peptide directing secretion; the sequence is MARKSNLPVLLVPFLLCQALVRC. Ser-24 carries the blocked amino end (Ser) modification. N-linked (GlcNAc...) asparagine glycosylation is present at Asn-38. Disulfide bonds link Cys-64-Cys-69 and Cys-163-Cys-179. The Nucleophile role is filled by Thr-206. Residues 234–237 and 257–260 contribute to the substrate site; these read RVGD and TGNG. A disulfide bridge links Cys-286 with Cys-306. Asn-308 carries N-linked (GlcNAc...) asparagine glycosylation. An intrachain disulfide couples Cys-317 to Cys-345.

It belongs to the Ntn-hydrolase family. Heterotetramer of two alpha and two beta chains arranged as a dimer of alpha/beta heterodimers. Post-translationally, cleaved into an alpha and beta chain by autocatalysis; this activates the enzyme. The N-terminal residue of the beta subunit is responsible for the nucleophile hydrolase activity. N-glycosylated.

Its subcellular location is the lysosome. It carries out the reaction N(4)-(beta-N-acetyl-D-glucosaminyl)-L-asparagine + H2O = N-acetyl-beta-D-glucosaminylamine + L-aspartate + H(+). Cleaves the GlcNAc-Asn bond which joins oligosaccharides to the peptide of asparagine-linked glycoproteins. In Homo sapiens (Human), this protein is N(4)-(beta-N-acetylglucosaminyl)-L-asparaginase (AGA).